The sequence spans 177 residues: Ribulose bisphosphate carboxylase small subunit, chloroplastic 6 (177 aa).

The N-terminal 56 residues, 1 to 56, are a transit peptide targeting the chloroplast; the sequence is MASSMMASTAAVARVGPAQTNMVAPFNGLRSSVAFPATRKANNDLSTLPSNGGRVS.

The protein belongs to the RuBisCO small chain family. Heterohexadecamer of 8 large and 8 small subunits.

Its subcellular location is the plastid. The protein resides in the chloroplast. In terms of biological role, ruBisCO catalyzes two reactions: the carboxylation of D-ribulose 1,5-bisphosphate, the primary event in carbon dioxide fixation, as well as the oxidative fragmentation of the pentose substrate. Both reactions occur simultaneously and in competition at the same active site. Although the small subunit is not catalytic it is essential for maximal activity. This chain is Ribulose bisphosphate carboxylase small subunit, chloroplastic 6, found in Lemna gibba (Swollen duckweed).